Here is a 266-residue protein sequence, read N- to C-terminus: Eukaryotic translation initiation factor 3 subunit J (266 aa).

Disordered stretches follow at residues 1-111 and 217-266; these read MAPS…EKDA and NEKM…DDFM. The segment covering 26 to 44 has biased composition (acidic residues); it reads DEEEEDVLDSWDAAEDSEV. The stretch at 40-82 forms a coiled coil; sequence EDSEVEREKAAKAAEAKAKAEAEAAANKKSKAQRIQEKKAQRK. Composition is skewed to basic and acidic residues over residues 45–61 and 73–85; these read EREK…KAEA and RIQE…KADA. The span at 86-97 shows a compositional bias: acidic residues; the sequence is DAEDSDDSDEDE. 2 stretches are compositionally biased toward basic and acidic residues: residues 98–111 and 218–230; these read AERR…EKDA and EKMK…DKGN. Residues 254–266 show a composition bias toward acidic residues; it reads SYDDDGLDDDDFM.

It belongs to the eIF-3 subunit J family. As to quaternary structure, component of the eukaryotic translation initiation factor 3 (eIF-3) complex.

Its subcellular location is the cytoplasm. In terms of biological role, component of the eukaryotic translation initiation factor 3 (eIF-3) complex, which is involved in protein synthesis of a specialized repertoire of mRNAs and, together with other initiation factors, stimulates binding of mRNA and methionyl-tRNAi to the 40S ribosome. The eIF-3 complex specifically targets and initiates translation of a subset of mRNAs involved in cell proliferation. This Aspergillus niger (strain ATCC MYA-4892 / CBS 513.88 / FGSC A1513) protein is Eukaryotic translation initiation factor 3 subunit J (hcr1).